A 107-amino-acid chain; its full sequence is Ferredoxin 1 (107 aa).

4Fe-4S ferredoxin-type domains follow at residues 2-30 and 31-60; these read TFVV…YEGP and NFLV…SEDE. 2 residues coordinate [3Fe-4S] cluster: Cys-9 and Cys-17. [4Fe-4S] cluster contacts are provided by Cys-21, Cys-40, Cys-43, and Cys-46. Residue Cys-50 participates in [3Fe-4S] cluster binding.

The cofactor is [4Fe-4S] cluster. [3Fe-4S] cluster is required as a cofactor.

Functionally, ferredoxins are iron-sulfur proteins that transfer electrons in a wide variety of metabolic reactions. This chain is Ferredoxin 1, found in Stutzerimonas stutzeri (Pseudomonas stutzeri).